A 128-amino-acid chain; its full sequence is Ribonuclease P protein component (128 aa).

Belongs to the RnpA family. In terms of assembly, consists of a catalytic RNA component (M1 or rnpB) and a protein subunit.

The catalysed reaction is Endonucleolytic cleavage of RNA, removing 5'-extranucleotides from tRNA precursor.. Functionally, RNaseP catalyzes the removal of the 5'-leader sequence from pre-tRNA to produce the mature 5'-terminus. It can also cleave other RNA substrates such as 4.5S RNA. The protein component plays an auxiliary but essential role in vivo by binding to the 5'-leader sequence and broadening the substrate specificity of the ribozyme. This is Ribonuclease P protein component from Prochlorococcus marinus (strain NATL1A).